A 122-amino-acid polypeptide reads, in one-letter code: Cytochrome b-c1 complex subunit 7-1, mitochondrial (122 aa).

This sequence belongs to the UQCRB/QCR7 family. In terms of assembly, component of the ubiquinol-cytochrome c oxidoreductase (cytochrome b-c1 complex, complex III, CIII), a multisubunit enzyme composed of 10 subunits. The complex is composed of 3 respiratory subunits cytochrome b (MT-CYB), cytochrome c1 (CYC1-1 or CYC1-2) and Rieske protein (UCR1-1 or UCR1-2), 2 core protein subunits MPPalpha1 (or MPPalpha2) and MPPB, and 5 low-molecular weight protein subunits QCR7-1 (or QCR7-2), UCRQ-1 (or UCRQ-2), QCR9, UCRY and probably QCR6-1 (or QCR6-2). The complex exists as an obligatory dimer and forms supercomplexes (SCs) in the inner mitochondrial membrane with NADH-ubiquinone oxidoreductase (complex I, CI), resulting in different assemblies (supercomplexes SCI(1)III(2) and SCI(2)III(4)).

Its subcellular location is the mitochondrion inner membrane. Functionally, component of the ubiquinol-cytochrome c oxidoreductase, a multisubunit transmembrane complex that is part of the mitochondrial electron transport chain which drives oxidative phosphorylation. The respiratory chain contains 3 multisubunit complexes succinate dehydrogenase (complex II, CII), ubiquinol-cytochrome c oxidoreductase (cytochrome b-c1 complex, complex III, CIII) and cytochrome c oxidase (complex IV, CIV), that cooperate to transfer electrons derived from NADH and succinate to molecular oxygen, creating an electrochemical gradient over the inner membrane that drives transmembrane transport and the ATP synthase. The cytochrome b-c1 complex catalyzes electron transfer from ubiquinol to cytochrome c, linking this redox reaction to translocation of protons across the mitochondrial inner membrane, with protons being carried across the membrane as hydrogens on the quinol. In the process called Q cycle, 2 protons are consumed from the matrix, 4 protons are released into the intermembrane space and 2 electrons are passed to cytochrome c. The sequence is that of Cytochrome b-c1 complex subunit 7-1, mitochondrial (QCR7-1) from Arabidopsis thaliana (Mouse-ear cress).